Here is a 360-residue protein sequence, read N- to C-terminus: MLVWLAEWLTPHLSFFHVVSYLTFRAIMSILTGLGFALWIGPRLIRRLQLLQIGQVVRNDGPESHFSKAGTPTMGGIMILLSIFLSVILWARLSNPYVWVVLFVLVSFGTIGFIDDYRKVIRKNPDGLIARWKYFWQSAAALVVAFFLYATATTDAQTVLVVPFFKDIMPQLGLLFILMTYFVIVGASNAVNLTDGLDGLAIMPTVMVAAGFALIAWATGNVNFANYLHIPYVANASELMVICTAIIGAGLGFLWFNTYPAQVFMGDVGSLALGAILGIIAVLVRQEFLLFIMGGVFVMETMSVILQVGSYKLRGQRIFRMAPIHHHYELKGWPEPRVIVRFWIITLVLVLLGLVTLKLR.

10 consecutive transmembrane segments (helical) span residues 21–41 (YLTF…LWIG), 71–91 (TPTM…ILWA), 94–114 (SNPY…IGFI), 142–162 (LVVA…VLVV), 168–188 (IMPQ…VGAS), 199–219 (GLAI…AWAT), 236–256 (ASEL…FLWF), 263–283 (VFMG…IAVL), 288–308 (FLLF…ILQV), and 338–358 (VIVR…VTLK).

The protein belongs to the glycosyltransferase 4 family. MraY subfamily. Mg(2+) serves as cofactor.

The protein resides in the cell inner membrane. The catalysed reaction is UDP-N-acetyl-alpha-D-muramoyl-L-alanyl-gamma-D-glutamyl-meso-2,6-diaminopimeloyl-D-alanyl-D-alanine + di-trans,octa-cis-undecaprenyl phosphate = di-trans,octa-cis-undecaprenyl diphospho-N-acetyl-alpha-D-muramoyl-L-alanyl-D-glutamyl-meso-2,6-diaminopimeloyl-D-alanyl-D-alanine + UMP. The protein operates within cell wall biogenesis; peptidoglycan biosynthesis. In terms of biological role, catalyzes the initial step of the lipid cycle reactions in the biosynthesis of the cell wall peptidoglycan: transfers peptidoglycan precursor phospho-MurNAc-pentapeptide from UDP-MurNAc-pentapeptide onto the lipid carrier undecaprenyl phosphate, yielding undecaprenyl-pyrophosphoryl-MurNAc-pentapeptide, known as lipid I. The protein is Phospho-N-acetylmuramoyl-pentapeptide-transferase of Tolumonas auensis (strain DSM 9187 / NBRC 110442 / TA 4).